The chain runs to 141 residues: MEMLQGLLLWLLLSVGGVWASRGPLRPLCRPINATLAAENEACPVCITFTTSICAGYCPSMVRVLPAALPPAPQPVCTYHELRFASIRLPGCPPGVDPMVSFPVALSCRCGPCRLSSSDCGGPRAQPLACDRPPLPGLLFL.

Residues Met-1–Ala-20 form the signal peptide. Cystine bridges form between Cys-29/Cys-77, Cys-43/Cys-92, Cys-46/Cys-130, Cys-54/Cys-108, Cys-58/Cys-110, and Cys-113/Cys-120. An N-linked (GlcNAc...) asparagine glycan is attached at Asn-33.

Belongs to the glycoprotein hormones subunit beta family. As to quaternary structure, heterodimer of a common alpha chain and a unique beta chain which confers biological specificity to thyrotropin, lutropin, follitropin and gonadotropin.

The protein localises to the secreted. In terms of biological role, promotes spermatogenesis and ovulation by stimulating the testes and ovaries to synthesize steroids. The polypeptide is Lutropin subunit beta (LHB1) (Ceratotherium simum (White rhinoceros)).